Here is a 213-residue protein sequence, read N- to C-terminus: Orotate phosphoribosyltransferase (213 aa).

Lys-26 serves as a coordination point for 5-phospho-alpha-D-ribose 1-diphosphate. Orotate is bound at residue 34–35 (FF). Residues 72 to 73 (YK), Arg-99, Lys-100, Lys-103, His-105, and 124 to 132 (DDVITAGTA) each bind 5-phospho-alpha-D-ribose 1-diphosphate. Residues Thr-128 and Arg-156 each coordinate orotate.

Belongs to the purine/pyrimidine phosphoribosyltransferase family. PyrE subfamily. As to quaternary structure, homodimer. Mg(2+) is required as a cofactor.

It carries out the reaction orotidine 5'-phosphate + diphosphate = orotate + 5-phospho-alpha-D-ribose 1-diphosphate. Its pathway is pyrimidine metabolism; UMP biosynthesis via de novo pathway; UMP from orotate: step 1/2. Catalyzes the transfer of a ribosyl phosphate group from 5-phosphoribose 1-diphosphate to orotate, leading to the formation of orotidine monophosphate (OMP). The polypeptide is Orotate phosphoribosyltransferase (Alteromonas mediterranea (strain DSM 17117 / CIP 110805 / LMG 28347 / Deep ecotype)).